A 401-amino-acid polypeptide reads, in one-letter code: Imidazolonepropionase (401 aa).

Positions 66 and 68 each coordinate Fe(3+). Residues H66 and H68 each coordinate Zn(2+). 4-imidazolone-5-propanoate contacts are provided by R75, Y138, and H171. Residue Y138 participates in N-formimidoyl-L-glutamate binding. Position 236 (H236) interacts with Fe(3+). A Zn(2+)-binding site is contributed by H236. Q239 contributes to the 4-imidazolone-5-propanoate binding site. Fe(3+) is bound at residue D311. D311 contacts Zn(2+). Positions 313 and 315 each coordinate N-formimidoyl-L-glutamate. T316 lines the 4-imidazolone-5-propanoate pocket.

It belongs to the metallo-dependent hydrolases superfamily. HutI family. It depends on Zn(2+) as a cofactor. Requires Fe(3+) as cofactor.

It localises to the cytoplasm. It carries out the reaction 4-imidazolone-5-propanoate + H2O = N-formimidoyl-L-glutamate. It functions in the pathway amino-acid degradation; L-histidine degradation into L-glutamate; N-formimidoyl-L-glutamate from L-histidine: step 3/3. Its function is as follows. Catalyzes the hydrolytic cleavage of the carbon-nitrogen bond in imidazolone-5-propanoate to yield N-formimidoyl-L-glutamate. It is the third step in the universal histidine degradation pathway. The chain is Imidazolonepropionase from Acinetobacter baumannii (strain AB307-0294).